The primary structure comprises 279 residues: Acetyl-coenzyme A carboxylase carboxyl transferase subunit beta (279 aa).

The CoA carboxyltransferase N-terminal domain maps to Leu23–Val279. Cys27, Cys30, Cys46, and Cys49 together coordinate Zn(2+). A C4-type zinc finger spans residues Cys27–Cys49.

It belongs to the AccD/PCCB family. As to quaternary structure, acetyl-CoA carboxylase is a heterohexamer composed of biotin carboxyl carrier protein (AccB), biotin carboxylase (AccC) and two subunits each of ACCase subunit alpha (AccA) and ACCase subunit beta (AccD). The cofactor is Zn(2+).

It localises to the cytoplasm. The enzyme catalyses N(6)-carboxybiotinyl-L-lysyl-[protein] + acetyl-CoA = N(6)-biotinyl-L-lysyl-[protein] + malonyl-CoA. It participates in lipid metabolism; malonyl-CoA biosynthesis; malonyl-CoA from acetyl-CoA: step 1/1. In terms of biological role, component of the acetyl coenzyme A carboxylase (ACC) complex. Biotin carboxylase (BC) catalyzes the carboxylation of biotin on its carrier protein (BCCP) and then the CO(2) group is transferred by the transcarboxylase to acetyl-CoA to form malonyl-CoA. This chain is Acetyl-coenzyme A carboxylase carboxyl transferase subunit beta, found in Chlorobium limicola (strain DSM 245 / NBRC 103803 / 6330).